Here is a 386-residue protein sequence, read N- to C-terminus: FHA domain-containing protein At4g14490 (386 aa).

The region spanning 28–78 is the FHA domain; sequence IRVGRIVRGNEIAIKDAGISTKHLRIESDSGNWVIQDLGSSNGTLLNSNAL. Residues 286–311 are disordered; sequence KNKGKNKKADQKPLKSFENDEVTDSG. Residues 292–303 show a composition bias toward basic and acidic residues; that stretch reads KKADQKPLKSFE.

This Arabidopsis thaliana (Mouse-ear cress) protein is FHA domain-containing protein At4g14490.